Consider the following 1140-residue polypeptide: Probable DNA-directed RNA polymerase II subunit RPB2 homolog (1140 aa).

A Mg(2+)-binding site is contributed by D773. Zn(2+) contacts are provided by C1092, C1095, C1105, and C1108. The C4-type zinc-finger motif lies at 1092-1108 (CKDCGMMSSTSKKCHHC).

The protein belongs to the RNA polymerase beta chain family.

It catalyses the reaction RNA(n) + a ribonucleoside 5'-triphosphate = RNA(n+1) + diphosphate. Its function is as follows. Component of the DNA-dependent RNA polymerase that catalyzes the transcription of DNA into RNA using the four ribonucleoside triphosphates as substrates. Second largest component of RNA polymerase II which synthesizes mRNA precursors and many functional non-coding RNAs. Proposed to contribute to the polymerase catalytic activity and forms the polymerase active center together with the largest subunit. This Invertebrate iridescent virus 3 (IIV-3) protein is Probable DNA-directed RNA polymerase II subunit RPB2 homolog.